We begin with the raw amino-acid sequence, 519 residues long: Berghepain-1 (519 aa).

Topologically, residues 1-32 are cytoplasmic; sequence MINDIRRINITTSSIESLNENSKYLKRNHKRT. The helical; Signal-anchor for type II membrane protein transmembrane segment at 33–53 threads the bilayer; the sequence is IKICAYAITTFALFFIVVVYF. The Lumenal segment spans residues 54 to 519; the sequence is KNQTNVNDAN…IGIDVFFPIL (466 aa). N-linked (GlcNAc...) asparagine glycosylation is found at Asn-55 and Asn-143. 4 cysteine pairs are disulfide-bonded: Cys-298-Cys-340, Cys-333-Cys-373, Cys-358-Cys-378, and Cys-427-Cys-508. Residue Cys-301 is part of the active site. An N-linked (GlcNAc...) asparagine glycan is attached at Asn-432. Residues His-433 and Asn-483 contribute to the active site.

It belongs to the peptidase C1 family.

The protein resides in the membrane. In terms of biological role, cysteine protease. Required for host hepatocyte-derived merozoite infectivity and to a lesser extent for host erythrocyte-derived merozoite infectivity. In Plasmodium berghei (strain Anka), this protein is Berghepain-1.